A 791-amino-acid polypeptide reads, in one-letter code: Calcium-transporting ATPase CtpE (791 aa).

A run of 3 helical transmembrane segments spans residues Leu-53–Ile-73, Ile-213–Leu-233, and Val-252–Val-272. The active-site 4-aspartylphosphate intermediate is the Asp-299. Mg(2+) is bound by residues Asp-299, Thr-301, and Asp-530. Transmembrane regions (helical) follow at residues Val-596–Gly-616, Ile-627–Ala-647, Ala-664–Tyr-684, Ala-697–Ala-717, Val-725–Gln-745, and Val-757–Trp-777.

Belongs to the cation transport ATPase (P-type) (TC 3.A.3) family.

The protein resides in the cell membrane. The enzyme catalyses Ca(2+)(in) + ATP + H2O = Ca(2+)(out) + ADP + phosphate + H(+). Its function is as follows. P-type ATPase involved in specific uptake of calcium. Essential for growth and maintenance of cell surface integrity under Ca(2+)-deficient conditions. The chain is Calcium-transporting ATPase CtpE from Mycolicibacterium smegmatis (strain ATCC 700084 / mc(2)155) (Mycobacterium smegmatis).